A 655-amino-acid polypeptide reads, in one-letter code: UvrABC system protein C (655 aa).

The GIY-YIG domain occupies Thr-16 to Leu-95. Residues Lys-207–Val-242 form the UVR domain.

This sequence belongs to the UvrC family. As to quaternary structure, interacts with UvrB in an incision complex.

Its subcellular location is the cytoplasm. The UvrABC repair system catalyzes the recognition and processing of DNA lesions. UvrC both incises the 5' and 3' sides of the lesion. The N-terminal half is responsible for the 3' incision and the C-terminal half is responsible for the 5' incision. The polypeptide is UvrABC system protein C (Renibacterium salmoninarum (strain ATCC 33209 / DSM 20767 / JCM 11484 / NBRC 15589 / NCIMB 2235)).